The following is a 585-amino-acid chain: Adenine deaminase (585 aa).

Belongs to the metallo-dependent hydrolases superfamily. Adenine deaminase family. Mn(2+) serves as cofactor.

The enzyme catalyses adenine + H2O + H(+) = hypoxanthine + NH4(+). This chain is Adenine deaminase, found in Halalkalibacterium halodurans (strain ATCC BAA-125 / DSM 18197 / FERM 7344 / JCM 9153 / C-125) (Bacillus halodurans).